Here is a 192-residue protein sequence, read N- to C-terminus: MIDFDGYRPNVGIVICNAERQVLWAKRYGQNSWQFPQGGINDNETAEQAMYRELYEEAGLTPKDVEILYVSKHWLRYKLPKRLLRHDNRPICIGQKQRWFLLQLVSDEKRINMQHTKSPEFDGWRWVSFWYPVRQVVTFKKDVYRKVMKEFALFLFDTNLKSRLSVPEEKKMFSSVKKKLIHKKNHKYSSNQ.

One can recognise a Nudix hydrolase domain in the interval 6–149 (GYRPNVGIVI…KKDVYRKVMK (144 aa)). The Nudix box signature appears at 38–59 (GGINDNETAEQAMYRELYEEAG).

Belongs to the Nudix hydrolase family. RppH subfamily. A divalent metal cation is required as a cofactor.

Its function is as follows. Accelerates the degradation of transcripts by removing pyrophosphate from the 5'-end of triphosphorylated RNA, leading to a more labile monophosphorylated state that can stimulate subsequent ribonuclease cleavage. This Histophilus somni (strain 129Pt) (Haemophilus somnus) protein is RNA pyrophosphohydrolase.